Reading from the N-terminus, the 58-residue chain is Ribulose bisphosphate carboxylase large chain (58 aa).

Positions Met1–Ser2 are excised as a propeptide. Position 3 is an N-acetylproline (Pro3). Lys14 is modified (N6,N6,N6-trimethyllysine).

This sequence belongs to the RuBisCO large chain family. Type I subfamily. As to quaternary structure, heterohexadecamer of 8 large chains and 8 small chains.

It localises to the plastid. It is found in the chloroplast. The catalysed reaction is 2 (2R)-3-phosphoglycerate + 2 H(+) = D-ribulose 1,5-bisphosphate + CO2 + H2O. The enzyme catalyses D-ribulose 1,5-bisphosphate + O2 = 2-phosphoglycolate + (2R)-3-phosphoglycerate + 2 H(+). RuBisCO catalyzes two reactions: the carboxylation of D-ribulose 1,5-bisphosphate, the primary event in carbon dioxide fixation, as well as the oxidative fragmentation of the pentose substrate in the photorespiration process. Both reactions occur simultaneously and in competition at the same active site. The sequence is that of Ribulose bisphosphate carboxylase large chain (rbcL) from Rosa damascena (Damask rose).